Consider the following 206-residue polypeptide: Amelogenin, Y isoform (206 aa).

The N-terminal stretch at 1–16 is a signal peptide; the sequence is MGTWILFACLVGAAFA. The disordered stretch occupies residues 118–180; that stretch reads VPGQQSMTPT…PPLPPMFPLR (63 aa). Over residues 128–142 the composition is skewed to low complexity; the sequence is QHHQPNLPLPAQQPF. Residues 143–180 show a composition bias toward pro residues; sequence QPQPVQPQPHQPMQPQPPVQPMQPLLPQPPLPPMFPLR.

Belongs to the amelogenin family.

The protein resides in the secreted. The protein localises to the extracellular space. It localises to the extracellular matrix. Functionally, plays a role in biomineralization. Seems to regulate the formation of crystallites during the secretory stage of tooth enamel development. Thought to play a major role in the structural organization and mineralization of developing enamel. This chain is Amelogenin, Y isoform (AMELY), found in Homo sapiens (Human).